We begin with the raw amino-acid sequence, 341 residues long: Diguanylate cyclase DgcP (341 aa).

In terms of domain architecture, GAF spans 18-154 (SLESLVRQLL…LFAGLIAQYI (137 aa)). In terms of domain architecture, GGDEF spans 204 to 337 (HKIMIAFIDL…KQKTPFVAHP (134 aa)). D212 is a Mg(2+) binding site. Substrate-binding residues include N220, H225, and D229. D255 is a binding site for Mg(2+). D255 acts as the Proton acceptor in catalysis.

As to quaternary structure, homodimer. Requires Mg(2+) as cofactor.

It carries out the reaction 2 GTP = 3',3'-c-di-GMP + 2 diphosphate. It participates in purine metabolism; 3',5'-cyclic di-GMP biosynthesis. Its function is as follows. Catalyzes the synthesis of cyclic-di-GMP (c-di-GMP) via the condensation of 2 GTP molecules. Cyclic-di-GMP is a second messenger which controls cell surface-associated traits in bacteria. In Escherichia coli (strain K12), this protein is Diguanylate cyclase DgcP.